Consider the following 91-residue polypeptide: Small ribosomal subunit protein bS20 (91 aa).

The interval 1 to 23 (MANTPSAKKRAKQAEKRRSHNAS) is disordered. The segment covering 7–20 (AKKRAKQAEKRRSH) has biased composition (basic residues).

This sequence belongs to the bacterial ribosomal protein bS20 family.

In terms of biological role, binds directly to 16S ribosomal RNA. The protein is Small ribosomal subunit protein bS20 of Pseudomonas aeruginosa (strain LESB58).